A 273-amino-acid polypeptide reads, in one-letter code: Tyrosinase (273 aa).

Positions 37, 53, 62, 189, 193, and 215 each coordinate Cu cation.

It belongs to the tyrosinase family. Cu(2+) serves as cofactor.

It catalyses the reaction 2 L-dopa + O2 = 2 L-dopaquinone + 2 H2O. The catalysed reaction is L-tyrosine + O2 = L-dopaquinone + H2O. Its function is as follows. This is a copper-containing oxidase that functions in the formation of pigments such as melanins and other polyphenolic compounds. This chain is Tyrosinase (melC2), found in Streptomyces lincolnensis.